Consider the following 996-residue polypeptide: Filament-like plant protein 5 (996 aa).

The tract at residues 1–20 (MEGRGWPWKRKSSDKATTEK) is disordered. Coiled-coil stretches lie at residues 59–94 (THMS…TKES), 133–248 (TAED…KYDL), 280–301 (VKKI…RKKL), and 359–387 (LTRR…LQVS). Disordered regions lie at residues 409–482 (NNDK…SSSR) and 496–534 (VGSD…DEDT). Residues 417 to 428 (SNSRNLSESLSS) are compositionally biased toward low complexity. The span at 471 to 482 (VNGSSKPRSSSR) shows a compositional bias: polar residues. Residues 503 to 527 (ANSASKSSNSVCSRRSVEKQSSSKS) show a composition bias toward low complexity. Coiled-coil stretches lie at residues 601-622 (QNSE…VANI), 737-841 (DSSC…FTTE), and 876-906 (NQEK…QSLQ). Residues 962-996 (IMKSSSVSSSSKEDNEKHTRGLGRFFSSKSKNSAR) are disordered.

It belongs to the FPP family. In terms of assembly, interacts with WPP/MAF proteins.

This Arabidopsis thaliana (Mouse-ear cress) protein is Filament-like plant protein 5 (FPP5).